Consider the following 313-residue polypeptide: Acetyl-coenzyme A carboxylase carboxyl transferase subunit alpha (313 aa).

The 255-residue stretch at 34 to 288 (KLKDQRDIAL…KNVVLEAVNE (255 aa)) folds into the CoA carboxyltransferase C-terminal domain.

This sequence belongs to the AccA family. In terms of assembly, acetyl-CoA carboxylase is a heterohexamer composed of biotin carboxyl carrier protein (AccB), biotin carboxylase (AccC) and two subunits each of ACCase subunit alpha (AccA) and ACCase subunit beta (AccD).

The protein resides in the cytoplasm. It catalyses the reaction N(6)-carboxybiotinyl-L-lysyl-[protein] + acetyl-CoA = N(6)-biotinyl-L-lysyl-[protein] + malonyl-CoA. Its pathway is lipid metabolism; malonyl-CoA biosynthesis; malonyl-CoA from acetyl-CoA: step 1/1. Its function is as follows. Component of the acetyl coenzyme A carboxylase (ACC) complex. First, biotin carboxylase catalyzes the carboxylation of biotin on its carrier protein (BCCP) and then the CO(2) group is transferred by the carboxyltransferase to acetyl-CoA to form malonyl-CoA. The polypeptide is Acetyl-coenzyme A carboxylase carboxyl transferase subunit alpha (Fusobacterium nucleatum subsp. nucleatum (strain ATCC 25586 / DSM 15643 / BCRC 10681 / CIP 101130 / JCM 8532 / KCTC 2640 / LMG 13131 / VPI 4355)).